The sequence spans 500 residues: 4-alpha-glucanotransferase (500 aa).

It belongs to the disproportionating enzyme family.

The protein resides in the cytoplasm. It carries out the reaction Transfers a segment of a (1-&gt;4)-alpha-D-glucan to a new position in an acceptor, which may be glucose or a (1-&gt;4)-alpha-D-glucan.. The protein is 4-alpha-glucanotransferase (malQ) of Thermus thermophilus.